The sequence spans 396 residues: Pinosylvin synthase 1 (396 aa).

60–63 (KFKR) is a substrate binding site. Residue cysteine 170 is part of the active site. Residues leucine 273 and 311–313 (GGH) each bind substrate.

The protein belongs to the thiolase-like superfamily. Chalcone/stilbene synthases family. As to quaternary structure, homodimer.

It is found in the cytoplasm. It catalyses the reaction (E)-cinnamoyl-CoA + 3 malonyl-CoA + 3 H(+) = (E)-pinosylvin + 4 CO2 + 4 CoA. It carries out the reaction 3-phenylpropanoyl-CoA + 3 malonyl-CoA + 3 H(+) = dihydropinosylvin + 4 CO2 + 4 CoA. The protein operates within phytoalexin biosynthesis; pinosylvin biosynthesis. In terms of biological role, catalyzes the production of pinosylvin from cinnamoyl-CoA and malonyl-CoA, and dihydropinosylvin from dihydrocinnamoyl-CoA. This is Pinosylvin synthase 1 from Pinus strobus (Eastern white pine).